Consider the following 32-residue polypeptide: DNA-binding protein HU (32 aa).

It belongs to the bacterial histone-like protein family.

In terms of biological role, histone-like DNA-binding protein which is capable of wrapping DNA to stabilize it, and thus to prevent its denaturation under extreme environmental conditions. In Synechocystis sp. (strain PCC 6701), this protein is DNA-binding protein HU (hup).